Here is an 887-residue protein sequence, read N- to C-terminus: Alanine--tRNA ligase (887 aa).

Zn(2+)-binding residues include H581, H585, C683, and H687.

The protein belongs to the class-II aminoacyl-tRNA synthetase family. Zn(2+) serves as cofactor.

It localises to the cytoplasm. The enzyme catalyses tRNA(Ala) + L-alanine + ATP = L-alanyl-tRNA(Ala) + AMP + diphosphate. In terms of biological role, catalyzes the attachment of alanine to tRNA(Ala) in a two-step reaction: alanine is first activated by ATP to form Ala-AMP and then transferred to the acceptor end of tRNA(Ala). Also edits incorrectly charged Ser-tRNA(Ala) and Gly-tRNA(Ala) via its editing domain. This Ehrlichia chaffeensis (strain ATCC CRL-10679 / Arkansas) protein is Alanine--tRNA ligase.